A 611-amino-acid polypeptide reads, in one-letter code: UvrABC system protein C (611 aa).

In terms of domain architecture, GIY-YIG spans 6–84; that stretch reads NNPGVYRMFN…IKRSRPRFNV (79 aa). Residues 194-229 form the UVR domain; sequence QSVKDHLAAAMQAASADLDFEHAAVYRDRLAALSHV.

Belongs to the UvrC family. In terms of assembly, interacts with UvrB in an incision complex.

The protein localises to the cytoplasm. Its function is as follows. The UvrABC repair system catalyzes the recognition and processing of DNA lesions. UvrC both incises the 5' and 3' sides of the lesion. The N-terminal half is responsible for the 3' incision and the C-terminal half is responsible for the 5' incision. The sequence is that of UvrABC system protein C from Brucella suis biovar 1 (strain 1330).